Consider the following 111-residue polypeptide: Putative splicing factor C222.18 (111 aa).

One can recognise an RRM domain in the interval 18 to 95; sequence HTLYIRNFGT…DIIFVEWAKS (78 aa).

Belongs to the splicing factor SR family.

The protein resides in the nucleus. Functionally, has a role in pre-mRNA splicing where it is involved in spliceosome assembly. This Schizosaccharomyces pombe (strain 972 / ATCC 24843) (Fission yeast) protein is Putative splicing factor C222.18.